A 500-amino-acid polypeptide reads, in one-letter code: Na(+)/H(+) antiporter NhaB (500 aa).

The next 11 membrane-spanning stretches (helical) occupy residues 13–33 (FLGA…IINP), 34–54 (IAVV…EFIF), 62–82 (CYPL…GLTS), 97–117 (ILLL…LLFI), 129–149 (IVIS…LDAL), 242–262 (FLYV…TVVI), 306–326 (GIVA…VGLV), 350–370 (FEEA…VSVI), 392–412 (PIMF…VFVA), 449–469 (VATP…IAPL), and 477–497 (MVWM…LCVT).

The protein belongs to the NhaB Na(+)/H(+) (TC 2.A.34) antiporter family.

The protein resides in the cell inner membrane. It carries out the reaction 2 Na(+)(in) + 3 H(+)(out) = 2 Na(+)(out) + 3 H(+)(in). Its function is as follows. Na(+)/H(+) antiporter that extrudes sodium in exchange for external protons. The sequence is that of Na(+)/H(+) antiporter NhaB from Marinomonas sp. (strain MWYL1).